A 144-amino-acid polypeptide reads, in one-letter code: MNFKYIIAVSFFIASAYARSEEKDVQSLSQRDVLEEESLREIRGIGGVLLSAGKAALKGLAKVLAEKYANGKRTAEDHEVMKRLEAVMRDLDSLDHPEEASERETRGFNQEEIANLFTKKEKRILGPVLGLVGNALGGLIKKIG.

The N-terminal stretch at 1-18 is a signal peptide; that stretch reads MNFKYIIAVSFFIASAYA. A propeptide spanning residues 19-43 is cleaved from the precursor; it reads RSEEKDVQSLSQRDVLEEESLREIR. Position 70 is an asparagine amide (N70). A propeptide spanning residues 74–123 is cleaved from the precursor; that stretch reads TAEDHEVMKRLEAVMRDLDSLDHPEEASERETRGFNQEEIANLFTKKEKR. The residue at position 143 (I143) is an Isoleucine amide.

Belongs to the bombinin family. Expressed by the skin glands.

The protein resides in the secreted. In terms of biological role, maximin-4 shows antibacterial activity against both Gram-positive and Gram-negative bacteria. It also shows antimicrobial activity against the fungus C.albicans, but not against A.flavus nor P.uticale. It has little hemolytic activity. It does not possess a significant cytotoxicity against tumor cell lines. It does not possess a significant anti-HIV activity. Maximin-H3 shows antibacterial activity against both Gram-positive and Gram-negative bacteria. It also shows antimicrobial activity against the fungus C.albicans. Shows strong hemolytic activity. The sequence is that of Maximins 4/H3 type 1 from Bombina maxima (Giant fire-bellied toad).